Consider the following 454-residue polypeptide: MSFVPGQENAGSRSSSGSRSGNGILKKTTWADQTERAGNNGNRGRRNQPKQTATTQPNSGSVVPHYSWFSGITQFQKGKEFQFADGQGVPIANGIPATEQKGYWYRHNRRSFKTPDGQQKQLLPRWYFYYLGTGPHAGAIYGDSIEGVFWVANSQADTNTRADIVERDPSSHEAIPTRFAPGTVLPQGFYVEGSGRSAPASRSGSRSQSRGPSNRARSSSNQRQPASTVKPDMAEEIAALVLAKLGKDAGQPKQVTKQSAKEVRQKILNKPRQKRTPNKQCPVQQCFGKRGPNQNFGGSEMLKLGTSDPQFPILAELAPTPGAFFFGSKLELVKKNSGGADEPTKDVYELQYSGAIRFDSTLPGFETIMKVLNENLNAYQKEAGGVDVVSPKPQRKGRRQAQEKKDEVDNVSVAKPKSSVQRNVSRELTPEDRSLLAQILDDGVVPDGLDDSNA.

A disordered region spans residues 1 to 62 (MSFVPGQENA…ATTQPNSGSV (62 aa)). The segment covering 11-21 (GSRSSSGSRSG) has biased composition (low complexity). Polar residues predominate over residues 49–61 (PKQTATTQPNSGS). The tract at residues 56–197 (QPNSGSVVPH…GFYVEGSGRS (142 aa)) is RNA-binding. A CoV N NTD domain is found at 64-193 (PHYSWFSGIT…VLPQGFYVEG (130 aa)). RNA contacts are provided by arginine 109, arginine 125, and arginine 167. Residue serine 170 is modified to Phosphoserine; by host. At threonine 177 the chain carries Phosphothreonine; by host. Disordered regions lie at residues 186–230 (PQGF…STVK), 271–292 (PRQKRTPNKQCPVQQCFGKRGP), and 385–428 (GVDV…SREL). Residues 193–227 (GSGRSAPASRSGSRSQSRGPSNRARSSSNQRQPAS) are compositionally biased toward low complexity. Phosphoserine; by host is present on serine 194. A CoV N CTD domain is found at 260-383 (AKEVRQKILN…ENLNAYQKEA (124 aa)). The segment at 267–384 (ILNKPRQKRT…NLNAYQKEAG (118 aa)) is dimerization. Residues serine 390 and serine 425 each carry the phosphoserine; by host modification. Threonine 429 carries the phosphothreonine; by host modification.

The protein belongs to the betacoronavirus nucleocapsid protein family. As to quaternary structure, homooligomer. Both monomeric and oligomeric forms interact with RNA. Interacts with protein M. Interacts with NSP3; this interaction serves to tether the genome to the newly translated replicase-transcriptase complex at a very early stage of infection. ADP-ribosylated. The ADP-ribosylation is retained in the virion during infection. Post-translationally, phosphorylated on serine and threonine residues.

It is found in the virion. It localises to the host endoplasmic reticulum-Golgi intermediate compartment. The protein resides in the host Golgi apparatus. In terms of biological role, packages the positive strand viral genome RNA into a helical ribonucleocapsid (RNP) and plays a fundamental role during virion assembly through its interactions with the viral genome and membrane protein M. Plays an important role in enhancing the efficiency of subgenomic viral RNA transcription as well as viral replication. This Rat coronavirus (strain NJ) (RCV-NJ) protein is Nucleoprotein.